Here is a 187-residue protein sequence, read N- to C-terminus: MSSGYSANQYENAFNSQKLQNWTVPKHFKERPSAAQGHTIFIASDRGHLLPGVKAKRGSAWPDFKGTWELPAHLPPASINPTARSEEGRQRLTHTYTHSGHGIHTHRAAKTTAAPAADGQTEGDQTCNAPTSERPVTGERPVTGQSGRGERPLTQASEREQSLTLTYSKRREQSLEETPQLEREEPQ.

The tract at residues 97–187 is disordered; that stretch reads THSGHGIHTH…TPQLEREEPQ (91 aa). Residues 122 to 131 show a composition bias toward polar residues; it reads EGDQTCNAPT. Residues 169 to 187 are compositionally biased toward basic and acidic residues; it reads KRREQSLEETPQLEREEPQ.

Belongs to the Flattop family.

The protein resides in the cytoplasm. The protein localises to the cytoskeleton. It is found in the cilium basal body. It localises to the cell projection. Its subcellular location is the cilium. The protein resides in the apical cell membrane. The protein localises to the cilium axoneme. In terms of biological role, microtubule inner protein (MIP) part of the dynein-decorated doublet microtubules (DMTs) in cilia axoneme. Acts as a regulator of cilium basal body docking and positioning in mono- and multiciliated cells. Regulates basal body docking and cilia formation in multiciliated lung cells. Regulates kinocilium positioning and stereocilia bundle morphogenesis in the inner ear. The sequence is that of Protein Flattop from Salmo salar (Atlantic salmon).